The sequence spans 294 residues: uncharacterized protein (294 aa).

3 consecutive transmembrane segments (helical) span residues 21–41 (AIVA…TFTF), 51–71 (PIIW…LWAA), and 77–97 (ILFS…VFLF). Residues 156-176 (HPVPFPAEPGSPDPVSPPPPI) are disordered. The stretch at 184 to 215 (ERAESLHAGNIELAEDLQRIQEMERNLENERS) forms a coiled coil. Over residues 265 to 277 (QQENESRLEERRF) the composition is skewed to basic and acidic residues. The interval 265–294 (QQENESRLEERRFQSHSTNSLFEADSSRDN) is disordered.

It localises to the mitochondrion membrane. This is an uncharacterized protein from Arabidopsis thaliana (Mouse-ear cress).